Reading from the N-terminus, the 438-residue chain is RNA polymerase sigma factor SigA (438 aa).

Residues 1–11 (MKKSKSKKKAA) show a composition bias toward basic residues. The tract at residues 1-69 (MKKSKSKKKA…PLDLEGPLEA (69 aa)) is disordered. Residues 12 to 26 (KAQEVEVKEPVKEPE) show a composition bias toward basic and acidic residues. Composition is skewed to acidic residues over residues 27-45 (PLPE…EPDP) and 52-69 (PELE…PLEA). A sigma-70 factor domain-1 region spans residues 93-128 (SDPVRQYLHEIGQVPLLTLEEEIDLARKVEEGMEAI). A sigma-70 factor domain-2 region spans residues 202–272 (LIEANLRLVV…NRAIADQART (71 aa)). The Interaction with polymerase core subunit RpoC motif lies at 226-229 (DLIQ). Residues 281-359 (ETINKLSRTA…DENLPSPVEA (79 aa)) form a sigma-70 factor domain-3 region. Residues 372-424 (ALSKLSEREAMVLKLRKGLIDGREHTLEEVGAYFGVTRERIRQIENKALRKLK) are sigma-70 factor domain-4. The H-T-H motif DNA-binding region spans 398 to 417 (LEEVGAYFGVTRERIRQIEN).

This sequence belongs to the sigma-70 factor family. RpoD/SigA subfamily. In terms of assembly, interacts transiently with the RNA polymerase catalytic core formed by RpoA, RpoB, RpoC and RpoZ (2 alpha, 1 beta, 1 beta' and 1 omega subunit) to form the RNA polymerase holoenzyme that can initiate transcription.

The protein localises to the cytoplasm. Functionally, sigma factors are initiation factors that promote the attachment of RNA polymerase to specific initiation sites and are then released. This sigma factor is the primary sigma factor during exponential growth. The sequence is that of RNA polymerase sigma factor SigA from Thermus aquaticus.